The primary structure comprises 597 residues: Hydrogenase-1 large chain (597 aa).

The Ni(2+) site is built by Cys-76, Cys-79, Cys-576, and Cys-579.

Belongs to the [NiFe]/[NiFeSe] hydrogenase large subunit family. Heterodimer of a large and a small subunit. Ni(2+) is required as a cofactor.

The protein resides in the cell membrane. It catalyses the reaction H2 + A = AH2. This is one of three E.coli hydrogenases synthesized in response to different physiological conditions. HYD1 is believed to have a role in hydrogen cycling during fermentative growth. This is Hydrogenase-1 large chain (hyaB) from Escherichia coli (strain K12).